We begin with the raw amino-acid sequence, 403 residues long: S-adenosylmethionine synthase (403 aa).

H17 is a binding site for ATP. D19 provides a ligand contact to Mg(2+). Residue E45 participates in K(+) binding. L-methionine is bound by residues E58 and Q104. The tract at residues 104–114 (QSPDIAQGVDT) is flexible loop. Residues 179-181 (DGK), 250-251 (KF), D259, 265-266 (RK), A282, and K286 contribute to the ATP site. D259 lines the L-methionine pocket. Residue K290 participates in L-methionine binding.

The protein belongs to the AdoMet synthase family. As to quaternary structure, homotetramer; dimer of dimers. It depends on Mg(2+) as a cofactor. Requires K(+) as cofactor.

It localises to the cytoplasm. The enzyme catalyses L-methionine + ATP + H2O = S-adenosyl-L-methionine + phosphate + diphosphate. It functions in the pathway amino-acid biosynthesis; S-adenosyl-L-methionine biosynthesis; S-adenosyl-L-methionine from L-methionine: step 1/1. Its function is as follows. Catalyzes the formation of S-adenosylmethionine (AdoMet) from methionine and ATP. The overall synthetic reaction is composed of two sequential steps, AdoMet formation and the subsequent tripolyphosphate hydrolysis which occurs prior to release of AdoMet from the enzyme. The protein is S-adenosylmethionine synthase of Mycobacterium ulcerans (strain Agy99).